Consider the following 203-residue polypeptide: Proteasome subunit beta 2 (203 aa).

The propeptide at 1–9 (MGEEVSIGA) is removed in mature form; by autocatalysis. T10 serves as the catalytic Nucleophile.

It belongs to the peptidase T1B family. In terms of assembly, the 20S proteasome core is composed of 14 alpha and 14 beta subunits that assemble into four stacked heptameric rings, resulting in a barrel-shaped structure. The two inner rings, each composed of seven catalytic beta subunits, are sandwiched by two outer rings, each composed of seven alpha subunits. The catalytic chamber with the active sites is on the inside of the barrel. Has a gated structure, the ends of the cylinder being occluded by the N-termini of the alpha-subunits. Is capped at one or both ends by the proteasome regulatory ATPase, PAN.

The protein resides in the cytoplasm. The catalysed reaction is Cleavage of peptide bonds with very broad specificity.. Its activity is regulated as follows. The formation of the proteasomal ATPase PAN-20S proteasome complex, via the docking of the C-termini of PAN into the intersubunit pockets in the alpha-rings, triggers opening of the gate for substrate entry. Interconversion between the open-gate and close-gate conformations leads to a dynamic regulation of the 20S proteasome proteolysis activity. Its function is as follows. Component of the proteasome core, a large protease complex with broad specificity involved in protein degradation. This is Proteasome subunit beta 2 from Pyrobaculum calidifontis (strain DSM 21063 / JCM 11548 / VA1).